Consider the following 526-residue polypeptide: Butyrophilin subfamily 1 member A1 (526 aa).

The N-terminal stretch at 1-26 (MAVFPSSGLPRCLLTLILLQLPKLDS) is a signal peptide. 2 Ig-like V-type domains span residues 27-138 (APFD…ALVH) and 148-234 (PHIS…VEIS). The Extracellular segment spans residues 27–242 (APFDVIGPPE…ISIPASSLPR (216 aa)). Disulfide bonds link C50/C124 and C164/C218. N-linked (GlcNAc...) asparagine glycosylation is found at N55 and N215. A helical membrane pass occupies residues 243–269 (LTPWIVAVAVILMVLGLLTIGSIFFTW). Over 270–526 (RLYNERPRER…IPTQPSQGAP (257 aa)) the chain is Cytoplasmic. In terms of domain architecture, B30.2/SPRY spans 285–479 (SKERLLEELK…LTICPIADGP (195 aa)). The disordered stretch occupies residues 495–526 (IPLSPMGEDSAPRDADTLHSKLIPTQPSQGAP). The segment covering 504 to 513 (SAPRDADTLH) has biased composition (basic and acidic residues). Residues 517-526 (IPTQPSQGAP) are compositionally biased toward polar residues.

Belongs to the immunoglobulin superfamily. BTN/MOG family. As to quaternary structure, seems to associate with xanthine dehydrogenase/oxidase. In terms of processing, N-glycosylated.

It is found in the membrane. Its subcellular location is the secreted. In terms of biological role, may function in the secretion of milk-fat droplets. May act as a specific membrane-associated receptor for the association of cytoplasmic droplets with the apical plasma membrane. Inhibits the proliferation of CD4 and CD8 T-cells activated by anti-CD3 antibodies, T-cell metabolism and IL2 and IFNG secretion. This chain is Butyrophilin subfamily 1 member A1 (BTN1A1), found in Homo sapiens (Human).